The primary structure comprises 366 residues: tRNA/tmRNA (uracil-C(5))-methyltransferase (366 aa).

Residues Gln-189, Tyr-217, Asn-222, Glu-238, and Asp-298 each coordinate S-adenosyl-L-methionine. The Nucleophile role is filled by Cys-323. Glu-357 functions as the Proton acceptor in the catalytic mechanism.

It belongs to the class I-like SAM-binding methyltransferase superfamily. RNA M5U methyltransferase family. TrmA subfamily.

The catalysed reaction is uridine(54) in tRNA + S-adenosyl-L-methionine = 5-methyluridine(54) in tRNA + S-adenosyl-L-homocysteine + H(+). It carries out the reaction uridine(341) in tmRNA + S-adenosyl-L-methionine = 5-methyluridine(341) in tmRNA + S-adenosyl-L-homocysteine + H(+). Its function is as follows. Dual-specificity methyltransferase that catalyzes the formation of 5-methyluridine at position 54 (m5U54) in all tRNAs, and that of position 341 (m5U341) in tmRNA (transfer-mRNA). This chain is tRNA/tmRNA (uracil-C(5))-methyltransferase, found in Shewanella oneidensis (strain ATCC 700550 / JCM 31522 / CIP 106686 / LMG 19005 / NCIMB 14063 / MR-1).